Here is a 192-residue protein sequence, read N- to C-terminus: MSKPSDRINLTNQFLIAMPNMADPTFSGTVVYLCDHSERGALGLVINRPTDIDLESLFNRIDLKLDIEPLLHIPVYFGGPVQTERGFVLHEPVEGASYNSSMSVDGGLEMTTSKDVLEAVATGTGPKRFLLTLGHAGWGAGQLEEEIARNGWLTVAADPRIVFDTPAEERFEAALGLLGVSSSMLSGEAGHA.

This sequence belongs to the UPF0301 (AlgH) family.

The protein is UPF0301 protein Bcen_0382 of Burkholderia orbicola (strain AU 1054).